We begin with the raw amino-acid sequence, 659 residues long: Tyrosine-protein kinase BTK (659 aa).

Ala-2 carries the N-acetylalanine modification. The PH domain occupies 3–133 (AVILESIFLK…WIHQLKNVIR (131 aa)). The segment at 12 to 24 (KRSQQKKKTSPLN) is inositol-(1,3,4,5)-tetrakisphosphate 1-binding. At Ser-21 the chain carries Phosphoserine. Positions 26, 28, and 39 each coordinate 1D-myo-inositol 1,3,4,5-tetrakisphosphate. Residue Tyr-40 is modified to Phosphotyrosine. Residue Lys-53 participates in 1D-myo-inositol 1,3,4,5-tetrakisphosphate binding. 2 positions are modified to phosphoserine: Ser-55 and Ser-115. Residues 135-171 (NSDLVQKYHPCFWIDGQYLCCSQTAKNAMGCQILENR) form a Btk-type zinc finger. The Zn(2+) site is built by His-143, Cys-154, Cys-155, and Cys-165. The tract at residues 171-210 (RNGSLKPGSSHRKTKKPLPPTPEEDQILKKPLPPEPAAAP) is disordered. At Ser-180 the chain carries Phosphoserine; by PKC/PRKCB. Thr-191 is subject to Phosphothreonine. The SH3 domain maps to 214 to 274 (SELKKVVALY…PSNYVTEAED (61 aa)). Tyr-223 is subject to Phosphotyrosine; by autocatalysis. Residues 281–377 (WYSKHMTRSQ…GLISRLKYPV (97 aa)) enclose the SH2 domain. Tyr-344 and Tyr-361 each carry phosphotyrosine. Residues 402–655 (LTFLKELGTG…ILLSNILDVM (254 aa)) enclose the Protein kinase domain. Residues 408-416 (LGTGQFGVV) and Lys-430 each bind ATP. Clofedanol is bound at residue 474 to 477 (TEYM). 474 to 477 (TEYM) is a binding site for dasatinib. The Proton acceptor role is filled by Asp-521. Residue Leu-542 coordinates clofedanol. Tyr-551 carries the phosphotyrosine; by LYN and SYK modification. The short motif at 581–588 (WAFGVLMW) is the CAV1-binding element. Ser-604 carries the post-translational modification Phosphoserine. Tyr-617 is modified (phosphotyrosine). Ser-623 and Ser-659 each carry phosphoserine.

The protein belongs to the protein kinase superfamily. Tyr protein kinase family. TEC subfamily. Part of a complex composed of EEIG1, TNFRSF11A/RANK, PLCG2, GAB2, TEC and BTK; complex formation increases in the presence of TNFSF11/RANKL. Binds GTF2I through the PH domain. Interacts with SH3BP5 via the SH3 domain. Interacts with IBTK via its PH domain. Interacts with ARID3A, CAV1, FASLG, PIN1, TLR8 and TLR9. Interacts with MPL/TPOR. Requires Zn(2+) as cofactor. Following B-cell receptor (BCR) engagement, translocates to the plasma membrane where it gets phosphorylated at Tyr-551 by LYN and SYK. Phosphorylation at Tyr-551 is followed by autophosphorylation of Tyr-223 which may create a docking site for a SH2 containing protein. Phosphorylation at Ser-180 by PRKCB, leads in translocation of BTK back to the cytoplasmic fraction. Phosphorylation at Ser-21 and Ser-115 creates a binding site for PIN1 at these Ser-Pro motifs, and promotes it's recruitment. In terms of tissue distribution, predominantly expressed in B-lymphocytes.

Its subcellular location is the cytoplasm. The protein localises to the cell membrane. It is found in the nucleus. It localises to the membrane raft. The enzyme catalyses L-tyrosyl-[protein] + ATP = O-phospho-L-tyrosyl-[protein] + ADP + H(+). Its activity is regulated as follows. Activated by phosphorylation. In primary B lymphocytes, is almost always non-phosphorylated and is thus catalytically inactive. Stimulation of TLR8 and TLR9 causes BTK activation. As a negative feedback mechanism to fine-tune BCR signaling, activated PRKCB down-modulates BTK function via direct phosphorylation of BTK at Ser-180, resulting in translocation of BTK back to the cytoplasmic fraction. PIN1, SH3BP5, and IBTK were also identified as BTK activity inhibitors. Interaction with CAV1 leads to dramatic down-regulation of the kinase activity of BTK. LFM-13A is a specific inhibitor of BTK. Dasatinib, a cancer drug acting as a tyrosine kinase inhibitor, also blocks BTK activity. Non-receptor tyrosine kinase indispensable for B lymphocyte development, differentiation and signaling. Binding of antigen to the B-cell antigen receptor (BCR) triggers signaling that ultimately leads to B-cell activation. After BCR engagement and activation at the plasma membrane, phosphorylates PLCG2 at several sites, igniting the downstream signaling pathway through calcium mobilization, followed by activation of the protein kinase C (PKC) family members. PLCG2 phosphorylation is performed in close cooperation with the adapter protein B-cell linker protein BLNK. BTK acts as a platform to bring together a diverse array of signaling proteins and is implicated in cytokine receptor signaling pathways. Plays an important role in the function of immune cells of innate as well as adaptive immunity, as a component of the Toll-like receptors (TLR) pathway. The TLR pathway acts as a primary surveillance system for the detection of pathogens and are crucial to the activation of host defense. Especially, is a critical molecule in regulating TLR9 activation in splenic B-cells. Within the TLR pathway, induces tyrosine phosphorylation of TIRAP which leads to TIRAP degradation. BTK also plays a critical role in transcription regulation. Induces the activity of NF-kappa-B, which is involved in regulating the expression of hundreds of genes. BTK is involved on the signaling pathway linking TLR8 and TLR9 to NF-kappa-B. Acts as an activator of NLRP3 inflammasome assembly by mediating phosphorylation of NLRP3. Transiently phosphorylates transcription factor GTF2I on tyrosine residues in response to BCR. GTF2I then translocates to the nucleus to bind regulatory enhancer elements to modulate gene expression. ARID3A and NFAT are other transcriptional target of BTK. BTK is required for the formation of functional ARID3A DNA-binding complexes. There is however no evidence that BTK itself binds directly to DNA. BTK has a dual role in the regulation of apoptosis. Plays a role in STING1-mediated induction of type I interferon (IFN) response by phosphorylating DDX41. In Homo sapiens (Human), this protein is Tyrosine-protein kinase BTK (BTK).